The sequence spans 88 residues: MNIFGVGLPEVTVILILALLIFGPKKLPELGKQLGKTLKSLKKASNEFQNEIDQVMNEQDKDESPISIESNQTNEINQEKIDSENSKK.

A helical transmembrane segment spans residues 3–23; sequence IFGVGLPEVTVILILALLIFG. The tract at residues 56–88 is disordered; sequence MNEQDKDESPISIESNQTNEINQEKIDSENSKK. Positions 67-76 are enriched in polar residues; that stretch reads SIESNQTNEI. Residues 77-88 are compositionally biased toward basic and acidic residues; it reads NQEKIDSENSKK.

The protein belongs to the TatA/E family. Forms a complex with TatC.

It localises to the cell inner membrane. Its function is as follows. Part of the twin-arginine translocation (Tat) system that transports large folded proteins containing a characteristic twin-arginine motif in their signal peptide across membranes. TatA could form the protein-conducting channel of the Tat system. The polypeptide is Sec-independent protein translocase protein TatA (Prochlorococcus marinus (strain AS9601)).